A 494-amino-acid chain; its full sequence is UDP-N-acetylmuramoyl-L-alanyl-D-glutamate--L-lysine ligase (494 aa).

Residue S30 coordinates UDP-N-acetyl-alpha-D-muramoyl-L-alanyl-D-glutamate. Residue 110–116 participates in ATP binding; that stretch reads GTNGKTS. Residues 152–153, S179, and R187 contribute to the UDP-N-acetyl-alpha-D-muramoyl-L-alanyl-D-glutamate site; that span reads TT. At K219 the chain carries N6-carboxylysine. The L-lysine recognition motif signature appears at 406–409; it reads DNPA.

It belongs to the MurCDEF family. MurE subfamily. Post-translationally, carboxylation is probably crucial for Mg(2+) binding and, consequently, for the gamma-phosphate positioning of ATP.

It is found in the cytoplasm. The catalysed reaction is UDP-N-acetyl-alpha-D-muramoyl-L-alanyl-D-glutamate + L-lysine + ATP = UDP-N-acetyl-alpha-D-muramoyl-L-alanyl-gamma-D-glutamyl-L-lysine + ADP + phosphate + H(+). It functions in the pathway cell wall biogenesis; peptidoglycan biosynthesis. In terms of biological role, catalyzes the addition of L-lysine to the nucleotide precursor UDP-N-acetylmuramoyl-L-alanyl-D-glutamate (UMAG) in the biosynthesis of bacterial cell-wall peptidoglycan. This is UDP-N-acetylmuramoyl-L-alanyl-D-glutamate--L-lysine ligase from Staphylococcus aureus (strain Mu3 / ATCC 700698).